A 337-amino-acid polypeptide reads, in one-letter code: Biotin synthase (337 aa).

The Radical SAM core domain occupies 52-281; sequence ADIQRASLLS…RSRVRLSAGR (230 aa). Residues C67, C71, and C74 each contribute to the [4Fe-4S] cluster site. 4 residues coordinate [2Fe-2S] cluster: C112, C144, C204, and R276.

Belongs to the radical SAM superfamily. Biotin synthase family. As to quaternary structure, homodimer. [4Fe-4S] cluster serves as cofactor. [2Fe-2S] cluster is required as a cofactor.

It catalyses the reaction (4R,5S)-dethiobiotin + (sulfur carrier)-SH + 2 reduced [2Fe-2S]-[ferredoxin] + 2 S-adenosyl-L-methionine = (sulfur carrier)-H + biotin + 2 5'-deoxyadenosine + 2 L-methionine + 2 oxidized [2Fe-2S]-[ferredoxin]. Its pathway is cofactor biosynthesis; biotin biosynthesis; biotin from 7,8-diaminononanoate: step 2/2. Its function is as follows. Catalyzes the conversion of dethiobiotin (DTB) to biotin by the insertion of a sulfur atom into dethiobiotin via a radical-based mechanism. This chain is Biotin synthase, found in Methylobacterium radiotolerans (strain ATCC 27329 / DSM 1819 / JCM 2831 / NBRC 15690 / NCIMB 10815 / 0-1).